A 278-amino-acid polypeptide reads, in one-letter code: HCLS1-associated protein X-1 (278 aa).

Ser-2 carries the N-acetylserine modification. The interval 2–43 is required for localization in mitochondria; that stretch reads SVFDLFRGFFGFPGPRSHRDPFFGGMTRDDDDDEDDEEEEDS. Disordered regions lie at residues 15-50 and 99-262; these read GPRS…GRES and LPSH…ALDD. Acidic residues predominate over residues 30-43; it reads DDDDDEDDEEEEDS. Residues 113–278 are involved in HCLS1 binding; sequence TPGVRLREGQ…LLLGRWFRSR (166 aa). The span at 132 to 152 shows a compositional bias: basic and acidic residues; sequence PDSHQPRIFEGVLESHAKPES. An involved in CASP9 binding region spans residues 174–205; it reads VSPHSRAREDKDLDSQVSQEGLGPLLQPQPKS. Residues 175-246 are involved in GNA13 binding; sequence SPHSRAREDK…TTVTHQEAHD (72 aa). The tract at residues 182 to 278 is required for localization in sarcoplasmic reticulum; it reads EDKDLDSQVS…LLLGRWFRSR (97 aa). Positions 183–278 are involved in PKD2 binding; the sequence is DKDLDSQVSQ…LLLGRWFRSR (96 aa). A phosphoserine mark is found at Ser-188 and Ser-191. The tract at residues 202-224 is involved in PLN binding; that stretch reads QPKSYFKSISVTKITKPDGTVEE. The interval 202-244 is involved in ATP2A2 binding; that stretch reads QPKSYFKSISVTKITKPDGTVEEHRTVVDSEGRRETTVTHQEA. The mediates interaction with UCP3 stretch occupies residues 209–278; the sequence is SISVTKITKP…LLLGRWFRSR (70 aa). Positions 216-254 are enriched in basic and acidic residues; that stretch reads TKPDGTVEEHRTVVDSEGRRETTVTHQEAHDSSRSDPDP. Residues 269–278 form a required for ITGB6 binding region; that stretch reads LLLGRWFRSR.

This sequence belongs to the HAX1 family. Interacts with ABCB1, ABCB4 and ABCB11. Directly associates with HCLS1/HS1, through binding to its N-terminal region. Interacts with CTTN. Interacts with PKD2. Interacts with GNA13. Interacts with CASP9. Interacts with ITGB6. Interacts with PLN and ATP2A2; these interactions are inhibited by calcium. Interacts with GRB7. Interacts (via C-terminus) with XIAP/BIRC4 (via BIR 2 domain and BIR 3 domain) and this interaction blocks ubiquitination of XIAP/BIRC4. Interacts with TPC2. Interacts with KCNC3. Interacts with XPO1. Interacts with RNF217. Interacts with UCP3; the interaction is direct and calcium-dependent. Interacts with MAPRE2; this interaction regulates cell migration in keratinocytes. In terms of tissue distribution, present in striated muscles (at protein level).

The protein resides in the mitochondrion matrix. Its subcellular location is the endoplasmic reticulum. It localises to the nucleus membrane. It is found in the cytoplasmic vesicle. The protein localises to the cytoplasm. The protein resides in the cell cortex. Its subcellular location is the cell membrane. It localises to the sarcoplasmic reticulum. It is found in the P-body. The protein localises to the nucleus. Functionally, recruits the Arp2/3 complex to the cell cortex and regulates reorganization of the cortical actin cytoskeleton via its interaction with KCNC3 and the Arp2/3 complex. Slows down the rate of inactivation of KCNC3 channels. Promotes GNA13-mediated cell migration. Involved in the clathrin-mediated endocytosis pathway. May be involved in internalization of ABC transporters such as ABCB11. May inhibit CASP9 and CASP3. Promotes cell survival. May regulate intracellular calcium pools. In Rattus norvegicus (Rat), this protein is HCLS1-associated protein X-1 (Hax1).